The chain runs to 280 residues: Transcription factor ovo-like homolog lin-48 (280 aa).

4 C2H2-type zinc fingers span residues 133–155 (LTCH…IKCH), 161–183 (YLCT…TRTH), 189–212 (YKCE…RKVH), and 228–251 (FVCE…KVVH).

It is found in the nucleus. In terms of biological role, transcription factor. Involved in development of the hindgut, the male tail, and the excretory duct cell. Involved in modulating function of excretory duct cells. Plays a role in left/right patterning of cell fates in the hindgut. This Caenorhabditis elegans protein is Transcription factor ovo-like homolog lin-48.